The sequence spans 252 residues: Pantothenate synthetase (252 aa).

29 to 36 (MGNLHAGH) is a binding site for ATP. The Proton donor role is filled by histidine 36. Glutamine 60 is a binding site for (R)-pantoate. Glutamine 60 contacts beta-alanine. 146–149 (GEKD) contributes to the ATP binding site. Glutamine 152 provides a ligand contact to (R)-pantoate. ATP-binding positions include valine 175 and 183 to 186 (CSSR).

It belongs to the pantothenate synthetase family. As to quaternary structure, homodimer.

It localises to the cytoplasm. The catalysed reaction is (R)-pantoate + beta-alanine + ATP = (R)-pantothenate + AMP + diphosphate + H(+). Its pathway is cofactor biosynthesis; (R)-pantothenate biosynthesis; (R)-pantothenate from (R)-pantoate and beta-alanine: step 1/1. In terms of biological role, catalyzes the condensation of pantoate with beta-alanine in an ATP-dependent reaction via a pantoyl-adenylate intermediate. This is Pantothenate synthetase from Legionella pneumophila (strain Corby).